The following is a 202-amino-acid chain: Securin-2 (202 aa).

Residues 60 to 105 are disordered; the sequence is TRKALGTVNRATEKSVKTNGPRKQKQPSFSAKKMTEKTVKTKSSVP. The D-box signature appears at 61–64; that stretch reads RKAL. An SH3-binding motif is present at residues 163-173; sequence PPSPVKMPSPP.

The protein belongs to the securin family. As to expression, expressed at low levels in the pituitary, liver, spleen, prostate, testis, ovary, small intestine and colon. Also expressed in various pituitary, testicular, liver and ovarian tumors.

The protein localises to the cytoplasm. The protein resides in the nucleus. This Homo sapiens (Human) protein is Securin-2 (PTTG2).